Consider the following 246-residue polypeptide: Peroxisomal membrane protein 11A (246 aa).

Topologically, residues 1 to 93 are cytoplasmic; sequence MDAFIRVANQ…LCLTLANLNR (93 aa). Residues 94-114 form a helical membrane-spanning segment; sequence VVYYICDTVLWAKSVGLTSGV. Residues 115 to 217 lie on the Lumenal side of the membrane; the sequence is NREKWQRWAA…LNQLGIYKSN (103 aa). A helical transmembrane segment spans residues 218-238; it reads LGVVGLGGLISSLAGLLTVVY. The tract at residues 218-238 is required for homodimerization, interaction with PEX11G, and peroxisomal localization; that stretch reads LGVVGLGGLISSLAGLLTVVY. Residues 239 to 246 are Cytoplasmic-facing; sequence PQLKLKAR.

Belongs to the peroxin-11 family. Homodimer. Heterodimer with PEX11G. Probably interacts with COPB2 and COPA. Interacts with PEX19. Interacts with FIS1. Strongly expressed in liver and at lower levels in heart, brain, kidney and testis.

Its subcellular location is the peroxisome membrane. In terms of biological role, may be involved in peroxisomal proliferation and may regulate peroxisomes division. May mediate binding of coatomer proteins to the peroxisomal membrane. Promotes membrane protrusion and elongation on the peroxisomal surface. This chain is Peroxisomal membrane protein 11A (Pex11a), found in Mus musculus (Mouse).